Consider the following 511-residue polypeptide: GMP synthase [glutamine-hydrolyzing] (511 aa).

Residues Leu-6–Asp-196 form the Glutamine amidotransferase type-1 domain. The active-site Nucleophile is the Cys-83. Residues His-170 and Glu-172 contribute to the active site. The GMPS ATP-PPase domain occupies Trp-197 to Arg-386. Ser-224–Ser-230 provides a ligand contact to ATP.

In terms of assembly, homodimer.

It catalyses the reaction XMP + L-glutamine + ATP + H2O = GMP + L-glutamate + AMP + diphosphate + 2 H(+). It participates in purine metabolism; GMP biosynthesis; GMP from XMP (L-Gln route): step 1/1. Functionally, catalyzes the synthesis of GMP from XMP. The chain is GMP synthase [glutamine-hydrolyzing] from Oceanobacillus iheyensis (strain DSM 14371 / CIP 107618 / JCM 11309 / KCTC 3954 / HTE831).